The sequence spans 85 residues: Elongation factor 1-beta (85 aa).

Belongs to the EF-1-beta/EF-1-delta family.

In terms of biological role, promotes the exchange of GDP for GTP in EF-1-alpha/GDP, thus allowing the regeneration of EF-1-alpha/GTP that could then be used to form the ternary complex EF-1-alpha/GTP/AAtRNA. The sequence is that of Elongation factor 1-beta from Methanosphaerula palustris (strain ATCC BAA-1556 / DSM 19958 / E1-9c).